A 396-amino-acid polypeptide reads, in one-letter code: Flavohemoprotein (396 aa).

Residues 1 to 136 (MLDAQTIATV…LANVFIHREA (136 aa)) enclose the Globin domain. His85 provides a ligand contact to heme b. Catalysis depends on charge relay system residues Tyr95 and Glu135. Residues 147-396 (GGWEGTRPFR…YECFGPHKVL (250 aa)) are reductase. One can recognise an FAD-binding FR-type domain in the interval 150–255 (EGTRPFRIVA…AAPAGDFFMN (106 aa)). Residues Tyr188 and 204–207 (RQYS) contribute to the FAD site. 268–273 (GVGQTP) contacts NADP(+). 389–392 (CFGP) is a binding site for FAD.

This sequence belongs to the globin family. Two-domain flavohemoproteins subfamily. It in the C-terminal section; belongs to the flavoprotein pyridine nucleotide cytochrome reductase family. As to quaternary structure, monomer. Heme b is required as a cofactor. Requires FAD as cofactor.

It catalyses the reaction 2 nitric oxide + NADPH + 2 O2 = 2 nitrate + NADP(+) + H(+). It carries out the reaction 2 nitric oxide + NADH + 2 O2 = 2 nitrate + NAD(+) + H(+). Is involved in NO detoxification in an aerobic process, termed nitric oxide dioxygenase (NOD) reaction that utilizes O(2) and NAD(P)H to convert NO to nitrate, which protects the bacterium from various noxious nitrogen compounds. Therefore, plays a central role in the inducible response to nitrosative stress. This Salmonella typhimurium (strain LT2 / SGSC1412 / ATCC 700720) protein is Flavohemoprotein (hmp).